The chain runs to 259 residues: Ribonuclease HII (259 aa).

The region spanning 70–258 (TLIAGIDEVG…VKSLVLGKKE (189 aa)) is the RNase H type-2 domain. Residues Asp-76, Glu-77, and Asp-168 each contribute to the a divalent metal cation site.

Belongs to the RNase HII family. The cofactor is Mn(2+). Mg(2+) serves as cofactor.

Its subcellular location is the cytoplasm. The enzyme catalyses Endonucleolytic cleavage to 5'-phosphomonoester.. In terms of biological role, endonuclease that specifically degrades the RNA of RNA-DNA hybrids. This is Ribonuclease HII from Streptococcus pneumoniae (strain Taiwan19F-14).